The primary structure comprises 168 residues: Pleiotrophin (168 aa).

The N-terminal stretch at 1–32 (MQTPQFLQQRRKFAAAFLAFIFLLAVVDTAEA) is a signal peptide. 5 disulfide bridges follow: Cys-47–Cys-76, Cys-55–Cys-85, Cys-62–Cys-89, Cys-99–Cys-131, and Cys-109–Cys-141. Chondroitin sulfate binding regions lie at residues 92–99 (KKQFGAEC) and 123–131 (KRALHNADC). A disordered region spans residues 139 to 168 (KPCGKVTKPKPQAESKKKKKEGKKQEKMLD). A chondroitin sulfate A binding region spans residues 147–168 (PKPQAESKKKKKEGKKQEKMLD).

This sequence belongs to the pleiotrophin family. In terms of assembly, interacts with ALK and NEK6. Interacts with PTPRZ1 (via chondroitin sulfate groups); promotes formation of homooligomers; oligomerization impairs tyrosine phosphatase activity. Forms a complex with PTPRZ1 and CTNNB1; this complex inactivates PTPRZ1 protein tyrosine phosphatase activity through PTN interaction and stimulates tyrosine phosphorylation of CTNNB1. Interacts with ITGB3 and ITGA5. Forms a complex with PTPRZ1 and integrin alpha-V/beta-3 (ITGAV:ITGB3) that stimulates endothelial cell migration through ITGB3 'Tyr-773' phosphorylation. Interacts with SDC3 (via heparan sulfate chains); this interaction mediates the neurite outgrowth-promoting signal from PTN to the cytoskeleton of growing neurites; this interaction mediates osteoblast recruitment. Interacts with GPC2 (via heparan sulfate); this interaction promotes neurite outgrowth through binding of PTN with chondroitin sulfate of proteoglycans, thereby releasing PTPRS of chondroitin sulfate proteoglycans (CSPGs) and leading to binding with heparan sulfate of GPC2. In terms of processing, phosphorylated by NEK6.

It is found in the secreted. Functionally, secreted growth factor that mediates its signal through cell-surface proteoglycan and non-proteoglycan receptors. Binds cell-surface proteoglycan receptor via their chondroitin sulfate (CS) groups. Thereby regulates many processes like cell proliferation, cell survival, cell growth, cell differentiation and cell migration in several tissues namely neuron and bone. Also plays a role in synaptic plasticity and learning-related behavior by inhibiting long-term synaptic potentiation. Binds PTPRZ1, leading to neutralization of the negative charges of the CS chains of PTPRZ1, inducing PTPRZ1 clustering, thereby causing the dimerization and inactivation of its phosphatase activity leading to increased tyrosine phosphorylation of each of the PTPRZ1 substrates like ALK, CTNNB1 or AFAP1L2 in order to activate the PI3K-AKT pathway. Through PTPRZ1 binding controls oligodendrocyte precursor cell differentiation by enhancing the phosphorylation of AFAP1L2 in order to activate the PI3K-AKT pathway. Forms a complex with PTPRZ1 and integrin alpha-V/beta-3 (ITGAV:ITGB3) that stimulates endothelial cell migration through SRC dephosphorylation and activation that consequently leads to ITGB3 'Tyr-773' phosphorylation. In adult hippocampus promotes dendritic arborization, spine development, and functional integration and connectivity of newborn granule neurons through ALK by activating AKT signaling pathway. Binds GPC2 and chondroitin sulfate proteoglycans (CSPGs) at the neuron surface, leading to abrogation of binding between PTPRS and CSPGs and neurite outgrowth promotion. Binds SDC3 and mediates bone formation by recruiting and attaching osteoblasts/osteoblast precursors to the sites for new bone deposition. Binds ALK and promotes cell survival and cell proliferation through MAPK pathway activation. Inhibits proliferation and enhances differentiation of neural stem cells by inhibiting FGF2-induced fibroblast growth factor receptor signaling pathway. Mediates regulatory mechanisms in normal hemostasis and in hematopoietic regeneration and in maintaining the balance of myeloid and lymphoid regeneration. In addition may play a role in the female reproductive system, auditory response and the progesterone-induced decidualization pathway. The polypeptide is Pleiotrophin (Sus scrofa (Pig)).